The sequence spans 276 residues: Large ribosomal subunit protein uL2 (276 aa).

Disordered regions lie at residues 30–52 (VKGLTEGKNKSGGRNNHGRTTSR) and 224–257 (VMNPVDHPHGGGEGRTSGGRHPVTPWGKPTKGYK). A compositionally biased stretch (polar residues) spans 41-52 (GGRNNHGRTTSR).

This sequence belongs to the universal ribosomal protein uL2 family. In terms of assembly, part of the 50S ribosomal subunit. Forms a bridge to the 30S subunit in the 70S ribosome.

Its function is as follows. One of the primary rRNA binding proteins. Required for association of the 30S and 50S subunits to form the 70S ribosome, for tRNA binding and peptide bond formation. It has been suggested to have peptidyltransferase activity; this is somewhat controversial. Makes several contacts with the 16S rRNA in the 70S ribosome. This Gluconacetobacter diazotrophicus (strain ATCC 49037 / DSM 5601 / CCUG 37298 / CIP 103539 / LMG 7603 / PAl5) protein is Large ribosomal subunit protein uL2.